Here is a 97-residue protein sequence, read N- to C-terminus: MKLTNYDIIRRPLITEKTMASMADKKYTFVVDIHANKSQIKNAIETIFDVKVEDVKTARIMGKTKRVGVHIGKRPDYKKAIVKLTEDSKTIEFFEGL.

Belongs to the universal ribosomal protein uL23 family. As to quaternary structure, part of the 50S ribosomal subunit. Contacts protein L29, and trigger factor when it is bound to the ribosome.

Its function is as follows. One of the early assembly proteins it binds 23S rRNA. One of the proteins that surrounds the polypeptide exit tunnel on the outside of the ribosome. Forms the main docking site for trigger factor binding to the ribosome. In Clostridium botulinum (strain ATCC 19397 / Type A), this protein is Large ribosomal subunit protein uL23.